The chain runs to 215 residues: RxLR effector protein PITG_00582 (215 aa).

The N-terminal stretch at 1–19 is a signal peptide; that stretch reads MLPYKTLLLALGFFFTVQC. The RxLR-dEER signature appears at 39–51; the sequence is RLLRSPEKTDEER. Residues 81–149 adopt a coiled-coil conformation; sequence VAKQAKEMSN…QNELEKLAKQ (69 aa).

The protein belongs to the RxLR effector family.

The protein resides in the secreted. The protein localises to the host cell membrane. In terms of biological role, effector that might be involved in host plant infection. The polypeptide is RxLR effector protein PITG_00582 (Phytophthora infestans (strain T30-4) (Potato late blight agent)).